The sequence spans 426 residues: Glutamate-1-semialdehyde 2,1-aminomutase (426 aa).

Lysine 265 is subject to N6-(pyridoxal phosphate)lysine.

This sequence belongs to the class-III pyridoxal-phosphate-dependent aminotransferase family. HemL subfamily. In terms of assembly, homodimer. Pyridoxal 5'-phosphate serves as cofactor.

It localises to the cytoplasm. It catalyses the reaction (S)-4-amino-5-oxopentanoate = 5-aminolevulinate. It functions in the pathway porphyrin-containing compound metabolism; protoporphyrin-IX biosynthesis; 5-aminolevulinate from L-glutamyl-tRNA(Glu): step 2/2. The chain is Glutamate-1-semialdehyde 2,1-aminomutase from Neisseria gonorrhoeae (strain NCCP11945).